The sequence spans 335 residues: Glycerol-3-phosphate dehydrogenase [NAD(P)+] (335 aa).

NADPH is bound by residues Trp-12 and Lys-106. Lys-106, Gly-136, and Ser-138 together coordinate sn-glycerol 3-phosphate. Ala-140 serves as a coordination point for NADPH. Residues Lys-191, Asp-244, Ser-254, Arg-255, and Asn-256 each coordinate sn-glycerol 3-phosphate. Lys-191 functions as the Proton acceptor in the catalytic mechanism. Position 255 (Arg-255) interacts with NADPH. 2 residues coordinate NADPH: Val-279 and Glu-281.

Belongs to the NAD-dependent glycerol-3-phosphate dehydrogenase family.

The protein resides in the cytoplasm. The catalysed reaction is sn-glycerol 3-phosphate + NAD(+) = dihydroxyacetone phosphate + NADH + H(+). It carries out the reaction sn-glycerol 3-phosphate + NADP(+) = dihydroxyacetone phosphate + NADPH + H(+). It participates in membrane lipid metabolism; glycerophospholipid metabolism. Functionally, catalyzes the reduction of the glycolytic intermediate dihydroxyacetone phosphate (DHAP) to sn-glycerol 3-phosphate (G3P), the key precursor for phospholipid synthesis. This chain is Glycerol-3-phosphate dehydrogenase [NAD(P)+], found in Fusobacterium nucleatum subsp. nucleatum (strain ATCC 25586 / DSM 15643 / BCRC 10681 / CIP 101130 / JCM 8532 / KCTC 2640 / LMG 13131 / VPI 4355).